A 490-amino-acid polypeptide reads, in one-letter code: MSTPGVNASASLSPDRLNSPVTIPAVMFIFGVVGNLVAIVVLCKSRKEQKETTFYTLVCGLAVTDLLGTLLVSPVTIATYMKGQWPGGQPLCEYSTFILLFFSLSGLSIICAMSVERYLAINHAYFYSHYVDKRLAGLTLFAVYASNVLFCALPNMGLGSSRLQYPDTWCFIDWTTNVTAHAAYSYMYAGFSSFLILATVLCNVLVCGALLRMHRQFMRRTSLGTEQHHAAAAAVTSVASRGHPAASPALPRLSDFRRRRSFRRIAGAEIQMVILLIATSLVVLICSIPLVVRVFVNQLYQPSLEREVSKNPDLQAIRIASVNPILDPWIYILLRKTVLSKAIEKIKCLFCRIGGSRRERSGQHCSDSQRTSSAMSGHSRSFISRELKEISSTSQTLLPDLSLPDLSENGLGGRNLLPGVPGMGLAQEDTTSLRTLRISETSDSSQGQDSESVLLVDEAGGSGRAGPAPKGSSLQVTFPSETLNLSEKCI.

At Met1–Ser19 the chain is on the extracellular side. N-linked (GlcNAc...) asparagine glycosylation occurs at Asn7. Residues Pro20–Cys43 traverse the membrane as a helical segment. Topologically, residues Lys44–Tyr55 are cytoplasmic. The helical transmembrane segment at Thr56–Thr79 threads the bilayer. Topologically, residues Tyr80–Thr96 are extracellular. Cys92 and Cys170 are joined by a disulfide. A helical membrane pass occupies residues Phe97–Val115. The Cytoplasmic segment spans residues Glu116–Leu135. The helical transmembrane segment at Ala136–Ser160 threads the bilayer. At Ser161–Tyr184 the chain is on the extracellular side. A helical transmembrane segment spans residues Ser185 to Leu211. The Cytoplasmic portion of the chain corresponds to Arg212–Glu269. The helical transmembrane segment at Ile270–Asn297 threads the bilayer. The Extracellular portion of the chain corresponds to Gln298–Leu314. A helical transmembrane segment spans residues Gln315–Leu334. Residues Arg335–Ile490 lie on the Cytoplasmic side of the membrane. Positions Glu359–His378 are disordered. Residues Gln363–His378 show a composition bias toward polar residues. Phosphoserine occurs at positions 376, 379, 381, and 384. Over residues Ser439–Glu451 the composition is skewed to polar residues. A disordered region spans residues Ser439–Thr477.

Belongs to the G-protein coupled receptor 1 family. In terms of assembly, interacts with FEM1A. Post-translationally, phosphorylation mediates agonist-mediated desensitization by promoting cytoplasmic retention.

It is found in the cell membrane. In terms of biological role, receptor for prostaglandin E2 (PGE2). The activity of this receptor is mediated by G(s) proteins that stimulate adenylate cyclase. Has a relaxing effect on smooth muscle. May play an important role in regulating renal hemodynamics, intestinal epithelial transport, adrenal aldosterone secretion, and uterine function. This Pan troglodytes (Chimpanzee) protein is Prostaglandin E2 receptor EP4 subtype (PTGER4).